We begin with the raw amino-acid sequence, 965 residues long: Valine--tRNA ligase (965 aa).

The tract at residues 1–22 is disordered; it reads MENTPSHINKTEPSLDKTYSPQ. Residues 56 to 66 carry the 'HIGH' region motif; sequence PNVTGSLHMGH. A 'KMSKS' region motif is present at residues 568 to 572; that stretch reads KMSKS. Lys-571 contacts ATP. Positions 896–965 form a coiled coil; the sequence is LIDKATELDR…IEQQATIAAL (70 aa).

It belongs to the class-I aminoacyl-tRNA synthetase family. ValS type 1 subfamily. Monomer.

It is found in the cytoplasm. The enzyme catalyses tRNA(Val) + L-valine + ATP = L-valyl-tRNA(Val) + AMP + diphosphate. Catalyzes the attachment of valine to tRNA(Val). As ValRS can inadvertently accommodate and process structurally similar amino acids such as threonine, to avoid such errors, it has a 'posttransfer' editing activity that hydrolyzes mischarged Thr-tRNA(Val) in a tRNA-dependent manner. This Yersinia pseudotuberculosis serotype I (strain IP32953) protein is Valine--tRNA ligase.